The chain runs to 150 residues: FAD synthase (150 aa).

Residues 11–12 (TF), 16–19 (HPGH), D96, and Y124 each bind ATP.

Belongs to the archaeal FAD synthase family. Homodimer. The cofactor is a divalent metal cation.

The catalysed reaction is FMN + ATP + H(+) = FAD + diphosphate. It participates in cofactor biosynthesis; FAD biosynthesis; FAD from FMN: step 1/1. Its function is as follows. Catalyzes the transfer of the AMP portion of ATP to flavin mononucleotide (FMN) to produce flavin adenine dinucleotide (FAD) coenzyme. The sequence is that of FAD synthase from Methanococcus maripaludis (strain C5 / ATCC BAA-1333).